A 119-amino-acid polypeptide reads, in one-letter code: UPF0102 protein Pmen_0910 (119 aa).

This sequence belongs to the UPF0102 family.

This chain is UPF0102 protein Pmen_0910, found in Ectopseudomonas mendocina (strain ymp) (Pseudomonas mendocina).